Here is a 341-residue protein sequence, read N- to C-terminus: Fructose-1,6-bisphosphatase class 1 1 (341 aa).

Mg(2+)-binding residues include E92, D114, L116, and D117. Substrate contacts are provided by residues 117-120, N209, and K275; that span reads DGSS. E281 contributes to the Mg(2+) binding site.

This sequence belongs to the FBPase class 1 family. Homotetramer. It depends on Mg(2+) as a cofactor.

It localises to the cytoplasm. It catalyses the reaction beta-D-fructose 1,6-bisphosphate + H2O = beta-D-fructose 6-phosphate + phosphate. The protein operates within carbohydrate biosynthesis; gluconeogenesis. In Leptothrix cholodnii (strain ATCC 51168 / LMG 8142 / SP-6) (Leptothrix discophora (strain SP-6)), this protein is Fructose-1,6-bisphosphatase class 1 1.